The primary structure comprises 161 residues: MRHNKKFNHLGRTNTHRDAMLSNMACSLIKHKRIFTTTAKAKALRKYVEPLITKSKEDTTHSRRVVFSNLQDKFAVTELFKEIAQKIGDRPGGYTRIIKTGNRLGDNAAMCFIELVDYNENMLKDTAAKKAPKTRRSRKKATASVAEAPTAEAASEEKAAE.

Positions 126–161 (TAAKKAPKTRRSRKKATASVAEAPTAEAASEEKAAE) are disordered. A compositionally biased stretch (basic residues) spans 130 to 141 (KAPKTRRSRKKA). Residues 142–153 (TASVAEAPTAEA) show a composition bias toward low complexity.

Belongs to the bacterial ribosomal protein bL17 family. In terms of assembly, part of the 50S ribosomal subunit. Contacts protein L32.

This chain is Large ribosomal subunit protein bL17, found in Parabacteroides distasonis (strain ATCC 8503 / DSM 20701 / CIP 104284 / JCM 5825 / NCTC 11152).